A 356-amino-acid chain; its full sequence is UDP-N-acetylglucosamine--N-acetylmuramyl-(pentapeptide) pyrophosphoryl-undecaprenol N-acetylglucosamine transferase (356 aa).

Residues 10 to 12 (TAG), Asn-123, Arg-159, Ser-193, Ile-240, and Gln-284 contribute to the UDP-N-acetyl-alpha-D-glucosamine site.

It belongs to the glycosyltransferase 28 family. MurG subfamily.

Its subcellular location is the cell membrane. It catalyses the reaction di-trans,octa-cis-undecaprenyl diphospho-N-acetyl-alpha-D-muramoyl-L-alanyl-D-glutamyl-meso-2,6-diaminopimeloyl-D-alanyl-D-alanine + UDP-N-acetyl-alpha-D-glucosamine = di-trans,octa-cis-undecaprenyl diphospho-[N-acetyl-alpha-D-glucosaminyl-(1-&gt;4)]-N-acetyl-alpha-D-muramoyl-L-alanyl-D-glutamyl-meso-2,6-diaminopimeloyl-D-alanyl-D-alanine + UDP + H(+). It functions in the pathway cell wall biogenesis; peptidoglycan biosynthesis. Functionally, cell wall formation. Catalyzes the transfer of a GlcNAc subunit on undecaprenyl-pyrophosphoryl-MurNAc-pentapeptide (lipid intermediate I) to form undecaprenyl-pyrophosphoryl-MurNAc-(pentapeptide)GlcNAc (lipid intermediate II). This Corynebacterium glutamicum (strain ATCC 13032 / DSM 20300 / JCM 1318 / BCRC 11384 / CCUG 27702 / LMG 3730 / NBRC 12168 / NCIMB 10025 / NRRL B-2784 / 534) protein is UDP-N-acetylglucosamine--N-acetylmuramyl-(pentapeptide) pyrophosphoryl-undecaprenol N-acetylglucosamine transferase.